The primary structure comprises 402 residues: Propionate kinase (402 aa).

Positions 11 and 18 each coordinate ATP. Residue N11 participates in Mg(2+) binding. R86 is a binding site for substrate. Catalysis depends on D143, which acts as the Proton donor/acceptor. ATP is bound by residues H175, 203–207, 278–280, and 326–330; these read HLGNG, DLR, and GIGEN.

The protein belongs to the acetokinase family. TdcD subfamily. As to quaternary structure, homodimer. The cofactor is Mg(2+).

It carries out the reaction propanoate + ATP = propanoyl phosphate + ADP. It functions in the pathway amino-acid degradation; L-threonine degradation via propanoate pathway; propanoate from L-threonine: step 4/4. Catalyzes the conversion of propionyl phosphate and ADP to propionate and ATP. The polypeptide is Propionate kinase (Enterobacter sp. (strain 638)).